Here is a 1013-residue protein sequence, read N- to C-terminus: Hemoglobin-binding protein A (1013 aa).

The N-terminal stretch at 1–24 is a signal peptide; the sequence is MTNFKFSLLACSIAFALNASTAYA. 8 consecutive repeat copies span residues 26-29, 30-33, 34-37, 38-41, 42-45, 46-49, 50-53, and 54-57. Residues 26-57 are 8 X 4 AA tandem repeats of Q-P-T-N; it reads QPTNQPTNQPTNQPTNQPTNQPTNQPTNQPTN. The span at 26–58 shows a compositional bias: low complexity; it reads QPTNQPTNQPTNQPTNQPTNQPTNQPTNQPTNQ. The tract at residues 26–61 is disordered; the sequence is QPTNQPTNQPTNQPTNQPTNQPTNQPTNQPTNQDSN. Residues 67-74 carry the TonB box motif; that stretch reads EQINVSGS. The 128-residue stretch at 78-205 folds into the TBDR plug domain; it reads SDSKTPPKIA…LGGSVIYKTK (128 aa). Positions 213–1013 constitute a TBDR beta-barrel domain; it reads NKDYYVSYKK…NYKMSVQFEF (801 aa). The TonB C-terminal box signature appears at 996–1013; sequence NRFYAPGRNYKMSVQFEF.

The protein belongs to the TonB-dependent receptor family. Hemoglobin/haptoglobin binding protein subfamily.

The protein resides in the cell outer membrane. Acts as a receptor for hemoglobin of the human host and is required for heme uptake. This Haemophilus influenzae protein is Hemoglobin-binding protein A (hgbA).